Consider the following 713-residue polypeptide: Mitochondrial intermediate peptidase (713 aa).

Residues 1–35 (MLCVGRLGGLGARAAALPPRRAGRGSLEAGIRARR) constitute a mitochondrion transit peptide. The residue at position 126 (lysine 126) is an N6-acetyllysine. Zn(2+) is bound at residue histidine 495. The active site involves glutamate 496. The Zn(2+) site is built by histidine 499 and histidine 502.

It belongs to the peptidase M3 family. In terms of assembly, monomer. Requires Zn(2+) as cofactor.

Its subcellular location is the mitochondrion matrix. The enzyme catalyses Release of an N-terminal octapeptide as second stage of processing of some proteins imported into the mitochondrion.. With respect to regulation, activity is divalent cation-dependent. It is stimulated by manganese, magnesium or calcium ions and reversibly inhibited by zinc, cobalt and iron. Cleaves proteins, imported into the mitochondrion, to their mature size. In Homo sapiens (Human), this protein is Mitochondrial intermediate peptidase (MIPEP).